The sequence spans 470 residues: Poly(A) polymerase catalytic subunit (470 aa).

Residues aspartate 192 and aspartate 194 contribute to the active site.

The protein belongs to the poxviridae poly(A) polymerase catalytic subunit family. As to quaternary structure, heterodimer of a large (catalytic) subunit and a small (regulatory) subunit.

The catalysed reaction is RNA(n) + ATP = RNA(n)-3'-adenine ribonucleotide + diphosphate. Polymerase that creates the 3'-poly(A) tail of mRNA's. This Homo sapiens (Human) protein is Poly(A) polymerase catalytic subunit (PAPL).